The following is a 332-amino-acid chain: Putative symporter YfeH (332 aa).

This sequence belongs to the bile acid:sodium symporter (BASS) (TC 2.A.28) family.

In Escherichia coli (strain K12), this protein is Putative symporter YfeH (yfeH).